A 432-amino-acid chain; its full sequence is MAVIESVYARQILDSRGNPTVEVYLETEDGAQGKGLVPSGASTGEAEAWERRDGDKSVYGGKGVLNAVKAVNEVIAPKVIGMDAADQRALDDLMIELDGTPNKGKLGANAILGVSLAALYASAESAGLPLYRYIGGTNGHILPVPNMNIMNGGAHADFATDIQEYMISPYGFDTYSEALRAGVEVYHTLKNVLKKEGLNTGLGDEGGFAPKMKSNEDSLKYIMDAISAAGYEPGKQIGICLDVASSEFYNKETGKYRFDGEERDSAYMLDYYENLINEYPIVSIEDPFNEEGWEDWAAITARLGDRLQFVGDDLLVTNPARLQKAIDLGAANSLLVKLNQIGSVTETLDAIELATANGYTSMVSHRSGETPDTTISDLAVAKNTRQIKTGAPARGERVAKYNRLLEIEEELGSTAQYAGYTAFKACKKYLAK.

A (2R)-2-phosphoglycerate-binding site is contributed by Gln163. Residue Glu205 is the Proton donor of the active site. Positions 242, 285, and 312 each coordinate Mg(2+). (2R)-2-phosphoglycerate is bound by residues Lys337, Arg366, Ser367, and Lys388. The active-site Proton acceptor is Lys337.

Belongs to the enolase family. Requires Mg(2+) as cofactor.

It localises to the cytoplasm. The protein localises to the secreted. The protein resides in the cell surface. The catalysed reaction is (2R)-2-phosphoglycerate = phosphoenolpyruvate + H2O. The protein operates within carbohydrate degradation; glycolysis; pyruvate from D-glyceraldehyde 3-phosphate: step 4/5. Catalyzes the reversible conversion of 2-phosphoglycerate (2-PG) into phosphoenolpyruvate (PEP). It is essential for the degradation of carbohydrates via glycolysis. This chain is Enolase, found in Bifidobacterium longum subsp. infantis (strain ATCC 15697 / DSM 20088 / JCM 1222 / NCTC 11817 / S12).